The following is a 572-amino-acid chain: Excitatory amino acid transporter 2 (572 aa).

The span at 1–11 (MASTEGANNMP) shows a compositional bias: polar residues. Residues 1 to 28 (MASTEGANNMPKQVEVRMHDSHLSSDEP) form a disordered region. At 1-44 (MASTEGANNMPKQVEVRMHDSHLSSDEPKHRNLGMRMCDKLGKN) the chain is on the cytoplasmic side. Ser-3, Ser-21, Ser-24, and Ser-25 each carry phosphoserine. Basic and acidic residues predominate over residues 14 to 28 (VEVRMHDSHLSSDEP). A lipid anchor (S-palmitoyl cysteine) is attached at Cys-38. The next 3 membrane-spanning stretches (helical) occupy residues 45–64 (LLLS…GGLL), 88–108 (MLKM…LSGL), and 121–142 (MVYY…VLAI). N-linked (GlcNAc...) asparagine glycosylation is found at Asn-205 and Asn-215. The next 3 helical transmembrane spans lie at 235–258 (FKDG…MGKM), 268–295 (FFNI…ACLI), and 317–338 (ITVI…YFVV). The segment at residues 344 to 374 (FSFFAGIFQAWITALGTASSAGTLPVTFRCL) is an intramembrane region (discontinuously helical). 361-363 (ASS) provides a ligand contact to L-aspartate. Residues 384 to 410 (VTRFVLPVGATINMDGTALYEAVAAIF) form a helical membrane-spanning segment. Residues Gly-392, Thr-394, and Asn-396 each contribute to the Na(+) site. Residues Thr-400, 441–445 (IPSAG), Asp-474, and Asn-481 contribute to the L-aspartate site. Positions 424–457 (IVTVSLTATLASIGAASIPSAGLVTMLLILTAVG) form an intramembrane region, discontinuously helical. Residues 471-492 (WLLDRMRTSVNVVGDSFGAGIV) form a helical membrane-spanning segment. Na(+)-binding residues include Asn-481 and Asp-485. 4 positions are modified to phosphoserine: Ser-505, Ser-520, Ser-530, and Ser-532. At Tyr-537 the chain carries Phosphotyrosine. A phosphoserine mark is found at Ser-542, Ser-558, and Ser-562.

This sequence belongs to the dicarboxylate/amino acid:cation symporter (DAACS) (TC 2.A.23) family. SLC1A2 subfamily. In terms of assembly, homotrimer. Interacts with AJUBA. Glycosylated. Post-translationally, palmitoylation at Cys-38 is not required for correct subcellular localization, but is important for glutamate uptake activity. In terms of tissue distribution, detected in brain. Detected in embryonic forebrain, especially in globus pallidus, perirhinal cortex, lateral hypothalamus, hippocampus, and on fimbria and axonal pathways connecting the neocortex, basal ganglia and thalamus (at protein level). Isoform GLT1 is expressed in the brain. Isoforms GLT-1A and GLT-1B are expressed in the liver.

It is found in the cell membrane. It carries out the reaction K(+)(in) + L-glutamate(out) + 3 Na(+)(out) + H(+)(out) = K(+)(out) + L-glutamate(in) + 3 Na(+)(in) + H(+)(in). The enzyme catalyses K(+)(in) + L-aspartate(out) + 3 Na(+)(out) + H(+)(out) = K(+)(out) + L-aspartate(in) + 3 Na(+)(in) + H(+)(in). The catalysed reaction is D-aspartate(out) + K(+)(in) + 3 Na(+)(out) + H(+)(out) = D-aspartate(in) + K(+)(out) + 3 Na(+)(in) + H(+)(in). Functionally, sodium-dependent, high-affinity amino acid transporter that mediates the uptake of L-glutamate and also L-aspartate and D-aspartate. Functions as a symporter that transports one amino acid molecule together with two or three Na(+) ions and one proton, in parallel with the counter-transport of one K(+) ion. Mediates Cl(-) flux that is not coupled to amino acid transport; this avoids the accumulation of negative charges due to aspartate and Na(+) symport. Essential for the rapid removal of released glutamate from the synaptic cleft, and for terminating the postsynaptic action of glutamate. This is Excitatory amino acid transporter 2 (Slc1a2) from Mus musculus (Mouse).